We begin with the raw amino-acid sequence, 73 residues long: UPF0337 protein lp_1708 (73 aa).

Composition is skewed to basic and acidic residues over residues Met1–Gln35 and Lys44–Asp73. Residues Met1–Asp73 form a disordered region.

The protein belongs to the UPF0337 (CsbD) family.

The chain is UPF0337 protein lp_1708 from Lactiplantibacillus plantarum (strain ATCC BAA-793 / NCIMB 8826 / WCFS1) (Lactobacillus plantarum).